A 65-amino-acid polypeptide reads, in one-letter code: MPKMKSKSGAAKRFRALGGGGFKRSHAFMRHILTKKSTKRKRQLRGMETVNASNHKAVARMLPYA.

Belongs to the bacterial ribosomal protein bL35 family.

The protein is Large ribosomal subunit protein bL35 of Thiobacillus denitrificans (strain ATCC 25259 / T1).